A 462-amino-acid chain; its full sequence is Argininosuccinate lyase (462 aa).

Belongs to the lyase 1 family. Argininosuccinate lyase subfamily.

It is found in the cytoplasm. It catalyses the reaction 2-(N(omega)-L-arginino)succinate = fumarate + L-arginine. The protein operates within amino-acid biosynthesis; L-arginine biosynthesis; L-arginine from L-ornithine and carbamoyl phosphate: step 3/3. In Xanthobacter autotrophicus (strain ATCC BAA-1158 / Py2), this protein is Argininosuccinate lyase.